The primary structure comprises 443 residues: Signal recognition particle 54 kDa protein (443 aa).

GTP is bound by residues 104-111 (GLQGSGKT), 184-188 (DTAGR), and 242-245 (TKLD).

It belongs to the GTP-binding SRP family. SRP54 subfamily. In terms of assembly, part of the signal recognition particle protein translocation system, which is composed of SRP and FtsY. Archaeal SRP consists of a 7S RNA molecule of 300 nucleotides and two protein subunits: SRP54 and SRP19.

It localises to the cytoplasm. It carries out the reaction GTP + H2O = GDP + phosphate + H(+). Its function is as follows. Involved in targeting and insertion of nascent membrane proteins into the cytoplasmic membrane. Binds to the hydrophobic signal sequence of the ribosome-nascent chain (RNC) as it emerges from the ribosomes. The SRP-RNC complex is then targeted to the cytoplasmic membrane where it interacts with the SRP receptor FtsY. The chain is Signal recognition particle 54 kDa protein from Methanosarcina barkeri (strain Fusaro / DSM 804).